Reading from the N-terminus, the 292-residue chain is Complex I assembly factor TIMMDC1, mitochondrial (292 aa).

Transmembrane regions (helical) follow at residues 146–168 (WSWRVAAFVTLFNTVNTGLTVYR) and 195–215 (GLLSGTIIGVILGFPAGVLIL).

This sequence belongs to the Tim17/Tim22/Tim23 family. In terms of assembly, associates with the intermediate 315 kDa subcomplex of incompletely assembled complex I.

It is found in the mitochondrion membrane. In terms of biological role, chaperone protein involved in the assembly of the mitochondrial NADH:ubiquinone oxidoreductase complex (complex I). Participates in constructing the membrane arm of complex I. The chain is Complex I assembly factor TIMMDC1, mitochondrial (timmdc1) from Danio rerio (Zebrafish).